Consider the following 203-residue polypeptide: Large ribosomal subunit protein bL25 (203 aa).

It belongs to the bacterial ribosomal protein bL25 family. CTC subfamily. As to quaternary structure, part of the 50S ribosomal subunit; part of the 5S rRNA/L5/L18/L25 subcomplex. Contacts the 5S rRNA. Binds to the 5S rRNA independently of L5 and L18.

In terms of biological role, this is one of the proteins that binds to the 5S RNA in the ribosome where it forms part of the central protuberance. The chain is Large ribosomal subunit protein bL25 from Rickettsia africae (strain ESF-5).